The chain runs to 294 residues: Phosphatidylserine decarboxylase proenzyme (294 aa).

Residues Asp-113, His-169, and Ser-256 each act as charge relay system; for autoendoproteolytic cleavage activity in the active site. Residue Ser-256 is the Schiff-base intermediate with substrate; via pyruvic acid; for decarboxylase activity of the active site. Ser-256 is subject to Pyruvic acid (Ser); by autocatalysis.

This sequence belongs to the phosphatidylserine decarboxylase family. PSD-B subfamily. Prokaryotic type II sub-subfamily. In terms of assembly, heterodimer of a large membrane-associated beta subunit and a small pyruvoyl-containing alpha subunit. The cofactor is pyruvate. Is synthesized initially as an inactive proenzyme. Formation of the active enzyme involves a self-maturation process in which the active site pyruvoyl group is generated from an internal serine residue via an autocatalytic post-translational modification. Two non-identical subunits are generated from the proenzyme in this reaction, and the pyruvate is formed at the N-terminus of the alpha chain, which is derived from the carboxyl end of the proenzyme. The autoendoproteolytic cleavage occurs by a canonical serine protease mechanism, in which the side chain hydroxyl group of the serine supplies its oxygen atom to form the C-terminus of the beta chain, while the remainder of the serine residue undergoes an oxidative deamination to produce ammonia and the pyruvoyl prosthetic group on the alpha chain. During this reaction, the Ser that is part of the protease active site of the proenzyme becomes the pyruvoyl prosthetic group, which constitutes an essential element of the active site of the mature decarboxylase.

The protein localises to the cell membrane. The enzyme catalyses a 1,2-diacyl-sn-glycero-3-phospho-L-serine + H(+) = a 1,2-diacyl-sn-glycero-3-phosphoethanolamine + CO2. It functions in the pathway phospholipid metabolism; phosphatidylethanolamine biosynthesis; phosphatidylethanolamine from CDP-diacylglycerol: step 2/2. Catalyzes the formation of phosphatidylethanolamine (PtdEtn) from phosphatidylserine (PtdSer). The chain is Phosphatidylserine decarboxylase proenzyme from Clostridium perfringens (strain ATCC 13124 / DSM 756 / JCM 1290 / NCIMB 6125 / NCTC 8237 / Type A).